The sequence spans 263 residues: 3'-5' ssDNA/RNA exonuclease TatD (263 aa).

A divalent metal cation is bound by residues Glu92, His128, and His153.

Belongs to the metallo-dependent hydrolases superfamily. TatD-type hydrolase family. TatD subfamily. In terms of assembly, monomer. It depends on Mg(2+) as a cofactor.

The protein localises to the cytoplasm. Its function is as follows. 3'-5' exonuclease that prefers single-stranded DNA and RNA. May play a role in the H(2)O(2)-induced DNA damage repair. The sequence is that of 3'-5' ssDNA/RNA exonuclease TatD from Rahnella sp. (strain Y9602).